Consider the following 445-residue polypeptide: Methylenetetrahydrofolate--tRNA-(uracil-5-)-methyltransferase TrmFO (445 aa).

10 to 15 serves as a coordination point for FAD; that stretch reads GGGLSG.

It belongs to the MnmG family. TrmFO subfamily. FAD serves as cofactor.

It localises to the cytoplasm. It catalyses the reaction uridine(54) in tRNA + (6R)-5,10-methylene-5,6,7,8-tetrahydrofolate + NADH + H(+) = 5-methyluridine(54) in tRNA + (6S)-5,6,7,8-tetrahydrofolate + NAD(+). It carries out the reaction uridine(54) in tRNA + (6R)-5,10-methylene-5,6,7,8-tetrahydrofolate + NADPH + H(+) = 5-methyluridine(54) in tRNA + (6S)-5,6,7,8-tetrahydrofolate + NADP(+). Catalyzes the folate-dependent formation of 5-methyl-uridine at position 54 (M-5-U54) in all tRNAs. The polypeptide is Methylenetetrahydrofolate--tRNA-(uracil-5-)-methyltransferase TrmFO (Lawsonia intracellularis (strain PHE/MN1-00)).